A 421-amino-acid chain; its full sequence is MSSPGNVRQKHGRDNDEHEGDSDDLNLQKSLPSSSQQKTPTKPVFGNKVNSESVKTSHHMSFSNKYDLVFPEPVESDNDETLWDVRDLSHRNRWSSVDPESAGPSKTVSTVLSESSTDTAVSERELTQLAQIRPLIFNSSSRAALRDCLKALQKKEELDIIREFLELEEMIPPDDFKSGYELQNRDKNRYRDILPYDSTRVPLGKNKDYINASYIRIVNHEEEYFYIATQGPLPDTIEDFWQMVLENNCNVIAMITREIEGGVIKCCSYWPVSLKEPLEFKHFHVLLENFQITQYFVIRIFQIVKKSTGKSHSVKHLQFIKWPDHGTPASADFFIKYVRYVRKSHITGPLLVHCSAGVGRTGVFICVDVVFCTIEKNYSFNIMNIVTQMRKQRFGMIQTKEQYQFCYEIVLEVLQNLLALN.

The disordered stretch occupies residues 1 to 58 (MSSPGNVRQKHGRDNDEHEGDSDDLNLQKSLPSSSQQKTPTKPVFGNKVNSESVKTSH). Over residues 27–41 (LQKSLPSSSQQKTPT) the composition is skewed to low complexity. The segment covering 48–58 (KVNSESVKTSH) has biased composition (polar residues). At serine 76 the chain carries Phosphoserine. The segment at 93 to 116 (RWSSVDPESAGPSKTVSTVLSESS) is disordered. Over residues 104–116 (PSKTVSTVLSESS) the composition is skewed to polar residues. Phosphoserine is present on serine 122. Residues 160-413 (IIREFLELEE…QFCYEIVLEV (254 aa)) form the Tyrosine-protein phosphatase domain. Substrate is bound by residues aspartate 324, 354–360 (CSAGVGR), and glutamine 398. Residue cysteine 354 is the Phosphocysteine intermediate of the active site.

The protein belongs to the protein-tyrosine phosphatase family. Non-receptor class subfamily.

It is found in the nucleus. The protein localises to the cytoplasm. It localises to the cytoskeleton. Its subcellular location is the microtubule organizing center. The protein resides in the centrosome. The catalysed reaction is O-phospho-L-tyrosyl-[protein] + H2O = L-tyrosyl-[protein] + phosphate. Functionally, tyrosine-protein phosphatase targeted to sites of actin polymerization in response of varied extracellular stimuli. Has tyrosine phosphatase activity towards various tyrosyl phosphorylated substrates. The protein is Tyrosine-protein phosphatase non-receptor type 20 (Ptpn20) of Rattus norvegicus (Rat).